A 630-amino-acid chain; its full sequence is L-amino-acid oxidase (630 aa).

The first 21 residues, 1–21 (MAGLALRLVLAATLLGLAGSL), serve as a signal peptide directing secretion. Cysteine 35 and cysteine 198 are joined by a disulfide. N-linked (GlcNAc...) asparagine glycosylation is present at asparagine 53. FAD contacts are provided by residues 68-69 (VA), 88-89 (EA), arginine 96, and 112-115 (GAMR). Arginine 115 contacts substrate. Residues asparagine 133 and asparagine 219 are each glycosylated (N-linked (GlcNAc...) asparagine). Residue valine 286 participates in FAD binding. Tyrosine 395 contributes to the substrate binding site. FAD-binding positions include glutamate 479 and 486 to 491 (GWVETA). 486–487 (GW) contributes to the substrate binding site. Residues 532–554 (GERPEEQQAREEVSPDEQEPSHK) are disordered.

This sequence belongs to the flavin monoamine oxidase family. FIG1 subfamily. The cofactor is FAD. As to expression, primarily found in immune tissues. In terms of tissue distribution, primarily found in immune tissues, mostly in B-lymphocytes. Restricted to the testis, predominantly in Sertoli cells at the periphery of the ducts, and the brain, including Purkinje cells, hippocampus and mitral cells in the olfactory bulb. No isoform 2 expression in fetal tissues.

It localises to the secreted. The protein resides in the cytoplasmic vesicle. Its subcellular location is the secretory vesicle. The protein localises to the acrosome. It is found in the lysosome. It catalyses the reaction an L-alpha-amino acid + O2 + H2O = a 2-oxocarboxylate + H2O2 + NH4(+). The enzyme catalyses L-tryptophan + O2 + H2O = indole-3-pyruvate + H2O2 + NH4(+). The catalysed reaction is L-phenylalanine + O2 + H2O = 3-phenylpyruvate + H2O2 + NH4(+). It carries out the reaction L-tyrosine + O2 + H2O = 3-(4-hydroxyphenyl)pyruvate + H2O2 + NH4(+). It catalyses the reaction L-arginine + O2 + H2O = 5-guanidino-2-oxopentanoate + H2O2 + NH4(+). Its pathway is amino-acid degradation; L-tryptophan degradation via pyruvate pathway. In terms of biological role, secreted L-amino-acid oxidase that acts as a key immunoregulator. Has preference for L-aromatic amino acids: converts phenylalanine (Phe), tyrosine (Tyr) and tryptophan (Trp) to phenylpyruvic acid (PP), hydroxyphenylpyruvic acid (HPP), and indole-3-pyruvic acid (I3P), respectively. Also has weak L-arginine oxidase activity. Acts as a negative regulator of anti-tumor immunity by mediating Trp degradation via an indole pyruvate pathway that activates the transcription factor AHR. IL4I1-mediated Trp catabolism generates I3P, giving rise to indole metabolites (indole-3-acetic acid (IAA) and indole-3-aldehyde (I3A)) and kynurenic acid, which act as ligands for AHR, a ligand-activated transcription factor that plays important roles in immunity and cancer. AHR activation by indoles following IL4I1-mediated Trp degradation enhances tumor progression by promoting cancer cell motility and suppressing adaptive immunity. Also has an immunoregulatory function in some immune cell, probably by mediating Trp degradation and promoting downstream AHR activation: inhibits T-cell activation and proliferation, promotes the differentiation of naive CD4(+) T-cells into FOXP3(+) regulatory T-cells (Treg) and regulates the development and function of B-cells. Also regulates M2 macrophage polarization by inhibiting T-cell activation. Also has antibacterial properties by inhibiting growth of Gram negative and Gram positive bacteria through the production of NH4(+) and H2O2. This is L-amino-acid oxidase from Mus musculus (Mouse).